Consider the following 181-residue polypeptide: Shikimate kinase (181 aa).

Residue 17–22 (GVGKTT) coordinates ATP. Thr-21 is a binding site for Mg(2+). Substrate contacts are provided by Asp-39, Arg-63, and Gly-85. Arg-122 contacts ATP. Substrate is bound at residue Arg-141.

It belongs to the shikimate kinase family. Monomer. The cofactor is Mg(2+).

The protein localises to the cytoplasm. The enzyme catalyses shikimate + ATP = 3-phosphoshikimate + ADP + H(+). It functions in the pathway metabolic intermediate biosynthesis; chorismate biosynthesis; chorismate from D-erythrose 4-phosphate and phosphoenolpyruvate: step 5/7. Its function is as follows. Catalyzes the specific phosphorylation of the 3-hydroxyl group of shikimic acid using ATP as a cosubstrate. In Nostoc punctiforme (strain ATCC 29133 / PCC 73102), this protein is Shikimate kinase.